The chain runs to 780 residues: Putative ABC transporter ATP-binding protein BL0043 (780 aa).

ABC transporter domains follow at residues 2 to 238 and 282 to 531; these read LKDI…QSET and IRVS…GPAH. 34–41 is a binding site for ATP; that stretch reads GPNGSGKS. The interval 230–272 is disordered; that stretch reads AEAVSQSETEGSIGTEAAPSRPTNDSPRQREREDGSELPLLSD. Residue 316–323 participates in ATP binding; the sequence is GVNGSGKS. A run of 4 helical transmembrane segments spans residues 551–573, 586–608, 623–645, and 759–778; these read FTMF…LAVI, SIHP…VRTG, GVTI…AVFL, and IAAR…AAII.

This sequence belongs to the ABC transporter superfamily.

It is found in the cell membrane. Its function is as follows. Probably part of an ABC transporter complex. Responsible for energy coupling to the transport system. The sequence is that of Putative ABC transporter ATP-binding protein BL0043 from Bifidobacterium longum (strain NCC 2705).